Here is a 128-residue protein sequence, read N- to C-terminus: Aspartate 1-decarboxylase (128 aa).

Serine 25 (schiff-base intermediate with substrate; via pyruvic acid) is an active-site residue. The residue at position 25 (serine 25) is a Pyruvic acid (Ser). A substrate-binding site is contributed by threonine 57. Catalysis depends on tyrosine 58, which acts as the Proton donor. 73-75 (GSA) contacts substrate.

It belongs to the PanD family. Heterooctamer of four alpha and four beta subunits. The cofactor is pyruvate. In terms of processing, is synthesized initially as an inactive proenzyme, which is activated by self-cleavage at a specific serine bond to produce a beta-subunit with a hydroxyl group at its C-terminus and an alpha-subunit with a pyruvoyl group at its N-terminus.

Its subcellular location is the cytoplasm. The enzyme catalyses L-aspartate + H(+) = beta-alanine + CO2. It functions in the pathway cofactor biosynthesis; (R)-pantothenate biosynthesis; beta-alanine from L-aspartate: step 1/1. In terms of biological role, catalyzes the pyruvoyl-dependent decarboxylation of aspartate to produce beta-alanine. This Paraburkholderia phytofirmans (strain DSM 17436 / LMG 22146 / PsJN) (Burkholderia phytofirmans) protein is Aspartate 1-decarboxylase.